A 663-amino-acid polypeptide reads, in one-letter code: DNA ligase (663 aa).

Residues 31–35 (DSEYD), 80–81 (SL), and Glu109 contribute to the NAD(+) site. The active-site N6-AMP-lysine intermediate is the Lys111. 4 residues coordinate NAD(+): Arg132, Glu166, Lys282, and Lys306. The Zn(2+) site is built by Cys400, Cys403, Cys418, and Cys423. One can recognise a BRCT domain in the interval 585–663 (ELHPVFGEKT…EQMMVDALRN (79 aa)).

It belongs to the NAD-dependent DNA ligase family. LigA subfamily. The cofactor is Mg(2+). Mn(2+) serves as cofactor.

The enzyme catalyses NAD(+) + (deoxyribonucleotide)n-3'-hydroxyl + 5'-phospho-(deoxyribonucleotide)m = (deoxyribonucleotide)n+m + AMP + beta-nicotinamide D-nucleotide.. Its function is as follows. DNA ligase that catalyzes the formation of phosphodiester linkages between 5'-phosphoryl and 3'-hydroxyl groups in double-stranded DNA using NAD as a coenzyme and as the energy source for the reaction. It is essential for DNA replication and repair of damaged DNA. The protein is DNA ligase of Macrococcus caseolyticus (strain JCSC5402) (Macrococcoides caseolyticum).